A 333-amino-acid chain; its full sequence is Taste receptor type 2 member 123 (333 aa).

At 1-14 (MFSQKTNYSHLFTF) the chain is on the extracellular side. The helical transmembrane segment at 15-37 (SIIFYVEIVTGILGNGFIALVNI) threads the bilayer. Residues 38–57 (MDWLKRRRISTADQILTALA) lie on the Cytoplasmic side of the membrane. Residues 58–77 (LTRLIYVWSVLICILLLFLC) form a helical membrane-spanning segment. Residues 78–91 (PHLSMRPEMFTAIG) are Extracellular-facing. Residues 92 to 114 (VIWVVDNHFSIWLATCLGVFYFL) traverse the membrane as a helical segment. Residues 115–133 (KIASFSNSLFLYLKWRVKK) are Cytoplasmic-facing. Residues 134-156 (VVLMIILISLIFLMLNISSLGMY) traverse the membrane as a helical segment. The Extracellular portion of the chain corresponds to 157 to 204 (DHFSIDVYEGNMSYNLVDSTHFPRIFLFTNSSKVFLIANSSHVFLPIN). Asn-167, Asn-186, and Asn-195 each carry an N-linked (GlcNAc...) asparagine glycan. A helical membrane pass occupies residues 205–227 (SLFMLIPFTVSLVAFFVLFLSLW). The Cytoplasmic segment spans residues 228 to 250 (KHHKKMQVNAKGPRDASTMAHTK). Residues 251 to 273 (ALQIGFSFLLLYAIYLLFIITGI) traverse the membrane as a helical segment. The Extracellular portion of the chain corresponds to 274-282 (LNLDLMRCI). Residues 283 to 305 (VILLFDHISGAVFSISHSFVLIL) traverse the membrane as a helical segment. Residues 306 to 333 (GNSKLRQATLSVLPCLRCRSKDMDTVVF) are Cytoplasmic-facing.

This sequence belongs to the G-protein coupled receptor T2R family. As to expression, expressed in subsets of taste receptor cells of the tongue and palate epithelium and exclusively in gustducin-positive cells. Expressed in the antrum and fundus (part of the stomach), duodenum and in gastric endocrine cells.

The protein localises to the membrane. Functionally, gustducin-coupled receptor implicated in the perception of bitter compounds in the oral cavity and the gastrointestinal tract. Signals through PLCB2 and the calcium-regulated cation channel TRPM5. The sequence is that of Taste receptor type 2 member 123 (Tas2r123) from Rattus norvegicus (Rat).